The following is a 360-amino-acid chain: MKASLLNKLDNLSDRFEELTALLGDAEVISKQTQFRAYSKEYAEIEPVIATFRELRKVQSDLEGAQALLKESDPDLREMAEEEVAQAKEALTTLEDKLQRMLLPKDPNDGRNVYLEVRAGTGGDEAAIFSGDLFRMYSRYAEKQGWRVEVLSANEGEHGGFKEVIARVEGDNVYAKLKFESGAHRVQRVPETESQGRIHTSACTVAVLPEPDEQAAIEINPADLRVDTYRSSGAGGQHVNTTDSAIRITHIPTGTVVECQEERSQHKNRAKAMAWLAAKLQDQQEAAAHKEISETRKLLVGSGDRSERIRTYNFPQGRVTDHRINLTLYSLSEVMAGGVEAVIEPLLAEYQADQLAALGD.

Q237 is subject to N5-methylglutamine.

Belongs to the prokaryotic/mitochondrial release factor family. In terms of processing, methylated by PrmC. Methylation increases the termination efficiency of RF1.

The protein localises to the cytoplasm. Functionally, peptide chain release factor 1 directs the termination of translation in response to the peptide chain termination codons UAG and UAA. This is Peptide chain release factor 1 from Ectopseudomonas mendocina (strain ymp) (Pseudomonas mendocina).